The primary structure comprises 499 residues: Probable aspartyl protease At4g16563 (499 aa).

Positions 1–26 (MKTCLIFFLYTTILQYYFHFSVSSLS) are cleaved as a signal peptide. The Peptidase A1 domain occupies 83 to 487 (YLISLSVGSS…DLLNRRVGFA (405 aa)). Asp-101 is a catalytic residue. The cysteines at positions 111 and 119 are disulfide-linked. Asn-175 and Asn-211 each carry an N-linked (GlcNAc...) asparagine glycan. The active site involves Asp-353. Cys-396 and Cys-445 are joined by a disulfide. Asn-400 and Asn-415 each carry an N-linked (GlcNAc...) asparagine glycan.

It belongs to the peptidase A1 family.

This Arabidopsis thaliana (Mouse-ear cress) protein is Probable aspartyl protease At4g16563.